Reading from the N-terminus, the 542-residue chain is Ribonuclease Y (542 aa).

Residues 1–21 (MLIALIAVSVLAVAAIIGSLA) form a helical membrane-spanning segment. The disordered stretch occupies residues 52–92 (SRASQDLADSRKDVAKARAELESSRTRASDEARRADNADQA). Positions 59 to 92 (ADSRKDVAKARAELESSRTRASDEARRADNADQA) are enriched in basic and acidic residues. Residues 229–289 (VVSVVPLPSN…MRREVARQAL (61 aa)) enclose the KH domain. One can recognise an HD domain in the interval 355–449 (VLDHCVECAR…VKAADAISAA (95 aa)).

Belongs to the RNase Y family.

It localises to the cell membrane. Functionally, endoribonuclease that initiates mRNA decay. The sequence is that of Ribonuclease Y from Cutibacterium acnes (strain DSM 16379 / KPA171202) (Propionibacterium acnes).